The chain runs to 119 residues: Large ribosomal subunit protein bL19 (119 aa).

The protein belongs to the bacterial ribosomal protein bL19 family.

Its function is as follows. This protein is located at the 30S-50S ribosomal subunit interface and may play a role in the structure and function of the aminoacyl-tRNA binding site. The sequence is that of Large ribosomal subunit protein bL19 from Petrotoga mobilis (strain DSM 10674 / SJ95).